The primary structure comprises 580 residues: Cyclin-K (580 aa).

Residues 262 to 580 form a disordered region; that stretch reads KQQMPHHTPH…GGLGRAAWMR (319 aa). 2 stretches are compositionally biased toward low complexity: residues 263 to 277 and 285 to 321; these read QQMP…QQPP and VPQV…QQPK. Residues serine 324, serine 328, serine 329, and serine 340 each carry the phosphoserine modification. Positions 377-386 are enriched in low complexity; the sequence is PLAAALGEAE. The segment covering 400–426 has biased composition (pro residues); that stretch reads QIPPPAHPAPVHQPPPLPHRPPPPPPS. Low complexity predominate over residues 427–444; the sequence is SYMTGMSTTSSYMSGEGY. A compositionally biased stretch (pro residues) spans 477 to 568; it reads VYPPNPPPPP…PPPIPPPGMP (92 aa).

The protein belongs to the cyclin family. Cyclin C subfamily. In terms of assembly, regulatory subunit of cyclin-dependent kinases. Identified in a complex with a kinase and the RNA polymerase II holoenzyme. Interacts with POLR2A. Interacts with CDK12 and CDK13. Interacts with CDK9 according to PubMed:10574912; does not interact with CDK9 according to PubMed:22012619. (Microbial infection) Interacts with human herpes virus 1 (HHV-1) transcriptional regulator ICP22. In terms of tissue distribution, widely expressed. Highest levels in testis.

Its subcellular location is the nucleus. Functionally, regulatory subunit of cyclin-dependent kinases that mediates activation of target kinases. Plays a role in transcriptional regulation via its role in regulating the phosphorylation of the C-terminal domain (CTD) of the large subunit of RNA polymerase II (POLR2A). The protein is Cyclin-K (CCNK) of Homo sapiens (Human).